We begin with the raw amino-acid sequence, 565 residues long: Fusion glycoprotein F0 (565 aa).

A signal peptide spans 1–25 (MATYIQRVQCISALLSVVLTTLVSC). Residues 26–500 (QIPRDRLSNI…VGRWYNSGAT (475 aa)) are Extracellular-facing. Cys70 and Cys199 form a disulfide bridge. The N-linked (GlcNAc...) asparagine; by host glycan is linked to Asn104. The fusion peptide stretch occupies residues 117–141 (FFGAVIGTIALGVATSAQITAGIAL). The stretch at 142–170 (AEAREAKRDIALIKESMTKTHKSIELLQN) forms a coiled coil. Residue Asn245 is glycosylated (N-linked (GlcNAc...) asparagine; by host). The interval 269–307 (IKGTVIDVDLERYMVTLSVKIPILSEVPGVLIHKASSIS) is leucine-zipper. Cystine bridges form between Cys338–Cys347, Cys362–Cys370, Cys394–Cys399, and Cys401–Cys424. An N-linked (GlcNAc...) asparagine; by host glycan is attached at Asn449. Positions 466–491 (NLAAATDFLQDSRAELEKARKILSEV) form a coiled coil. The chain crosses the membrane as a helical span at residues 501 to 521 (LITIIVVMIVVLVVIIVIVIV). At 522–565 (LYRLRRSMLMSNPAGRISRDTYTLEPKIRHMYTNGGFDAMTEKR) the chain is on the cytoplasmic side.

This sequence belongs to the paramyxoviruses fusion glycoprotein family. As to quaternary structure, homotrimer of disulfide-linked F1-F2. Interacts with HN and M proteins. In natural infection, inactive F0 is matured into F1 and F2 outside the cell by one or more trypsin-like, arginine-specific endoprotease secreted by the bronchial epithelial cells. One identified protease that may be involved in this process is tryptase Clara. Unlike most paramyxoviruses, Sendai F0 processing occurs on the cell surface and induces a conformational change in the protein that unmasks the fusion peptide. F0 maturation is a primary determinant for organ tropism and pathogenicity. F1 and F2 display interchain and intrachain disulfide bonds, that are necessary for correct folding and intracellular transport. Post-translationally, N-glycosylated; glycans consist of a mixture of high mannose-type oligosaccharides and of complex-type oligosaccharides. Glycosylation at Asn-245 is essential for membrane localization and F0 cleavage.

Its subcellular location is the virion membrane. It localises to the host cell membrane. Class I viral fusion protein. Under the current model, the protein has at least 3 conformational states: pre-fusion native state, pre-hairpin intermediate state, and post-fusion hairpin state. During viral and plasma cell membrane fusion, the heptad repeat (HR) regions assume a trimer-of-hairpins structure, positioning the fusion peptide in close proximity to the C-terminal region of the ectodomain. The formation of this structure appears to drive apposition and subsequent fusion of viral and plasma cell membranes. Directs fusion of viral and cellular membranes leading to delivery of the nucleocapsid into the cytoplasm. This fusion is pH independent and occurs directly at the outer cell membrane. The trimer of F1-F2 (F protein) interacts with HN tetramer at the virion surface. Upon HN binding to its cellular receptor, the hydrophobic fusion peptide is unmasked and interacts with the cellular membrane, inducing the fusion between cell and virion membranes. Later in infection, F proteins expressed at the plasma membrane of infected cells could mediate fusion with adjacent cells to form syncytia, a cytopathic effect that could lead to tissue necrosis. The protein is Fusion glycoprotein F0 (F) of Sendai virus (strain Hamamatsu) (SeV).